A 362-amino-acid chain; its full sequence is Phosphoserine aminotransferase (362 aa).

Residues S9 and R42 each coordinate L-glutamate. Residues 76–77 (GR), W102, T153, D174, and Q197 contribute to the pyridoxal 5'-phosphate site. K198 is modified (N6-(pyridoxal phosphate)lysine). 239 to 240 (NT) contacts pyridoxal 5'-phosphate.

Belongs to the class-V pyridoxal-phosphate-dependent aminotransferase family. SerC subfamily. In terms of assembly, homodimer. It depends on pyridoxal 5'-phosphate as a cofactor.

Its subcellular location is the cytoplasm. It carries out the reaction O-phospho-L-serine + 2-oxoglutarate = 3-phosphooxypyruvate + L-glutamate. It catalyses the reaction 4-(phosphooxy)-L-threonine + 2-oxoglutarate = (R)-3-hydroxy-2-oxo-4-phosphooxybutanoate + L-glutamate. Its pathway is amino-acid biosynthesis; L-serine biosynthesis; L-serine from 3-phospho-D-glycerate: step 2/3. It functions in the pathway cofactor biosynthesis; pyridoxine 5'-phosphate biosynthesis; pyridoxine 5'-phosphate from D-erythrose 4-phosphate: step 3/5. In terms of biological role, catalyzes the reversible conversion of 3-phosphohydroxypyruvate to phosphoserine and of 3-hydroxy-2-oxo-4-phosphonooxybutanoate to phosphohydroxythreonine. The sequence is that of Phosphoserine aminotransferase from Escherichia coli (strain ATCC 8739 / DSM 1576 / NBRC 3972 / NCIMB 8545 / WDCM 00012 / Crooks).